We begin with the raw amino-acid sequence, 544 residues long: Chaperonin GroEL (544 aa).

ATP contacts are provided by residues 30 to 33 (TLGP), Lys51, 87 to 91 (DGTTT), Gly415, 479 to 481 (NAA), and Asp495.

It belongs to the chaperonin (HSP60) family. Forms a cylinder of 14 subunits composed of two heptameric rings stacked back-to-back. Interacts with the co-chaperonin GroES.

It is found in the cytoplasm. It carries out the reaction ATP + H2O + a folded polypeptide = ADP + phosphate + an unfolded polypeptide.. Functionally, together with its co-chaperonin GroES, plays an essential role in assisting protein folding. The GroEL-GroES system forms a nano-cage that allows encapsulation of the non-native substrate proteins and provides a physical environment optimized to promote and accelerate protein folding. The chain is Chaperonin GroEL from Francisella tularensis subsp. tularensis (strain SCHU S4 / Schu 4).